The primary structure comprises 622 residues: Polypeptide N-acetylgalactosaminyltransferase 6 (622 aa).

Residues 1-8 are Cytoplasmic-facing; that stretch reads MRLLRRRH. Residues 9–28 form a helical; Signal-anchor for type II membrane protein membrane-spanning segment; sequence MSLRLAMLGSVFMLFLFIRQ. The Lumenal portion of the chain corresponds to 29-622; that stretch reads KDVSNQEQAM…RDPYQLWLFV (594 aa). The N-linked (GlcNAc...) asparagine glycan is linked to N86. Positions 176–285 are catalytic subdomain A; that stretch reads LPTTSVIIVF…HGWLEPLLAR (110 aa). 3 residues coordinate Mn(2+): D269, H271, and H407. The interval 348–410 is catalytic subdomain B; the sequence is PIKSPTFAGG…PCSVVGHVFR (63 aa). N476 carries N-linked (GlcNAc...) asparagine glycosylation. The Ricin B-type lectin domain occupies 506–622; the sequence is TNQCLDVGEN…RDPYQLWLFV (117 aa). A disulfide bridge links C509 with C527. UDP-N-acetyl-alpha-D-galactosamine-binding residues include D511, E514, H528, and N533. 2 disulfides stabilise this stretch: C553–C566 and C597–C610.

It belongs to the glycosyltransferase 2 family. GalNAc-T subfamily. It depends on Mn(2+) as a cofactor.

It is found in the golgi apparatus membrane. The catalysed reaction is L-seryl-[protein] + UDP-N-acetyl-alpha-D-galactosamine = a 3-O-[N-acetyl-alpha-D-galactosaminyl]-L-seryl-[protein] + UDP + H(+). The enzyme catalyses L-threonyl-[protein] + UDP-N-acetyl-alpha-D-galactosamine = a 3-O-[N-acetyl-alpha-D-galactosaminyl]-L-threonyl-[protein] + UDP + H(+). It participates in protein modification; protein glycosylation. Catalyzes the initial reaction in O-linked oligosaccharide biosynthesis, the transfer of an N-acetyl-D-galactosamine residue to a serine or threonine residue on the protein receptor. May participate in synthesis of oncofetal fibronectin. Has activity toward Muc1a, Muc2, EA2 and fibronectin peptides. The polypeptide is Polypeptide N-acetylgalactosaminyltransferase 6 (Galnt6) (Mus musculus (Mouse)).